Reading from the N-terminus, the 418-residue chain is EPS I polysaccharide export inner membrane protein EpsF (418 aa).

The next 10 membrane-spanning stretches (helical) occupy residues 21-41, 45-65, 142-162, 170-190, 222-242, 262-282, 296-316, 326-346, 347-367, and 377-397; these read VLVV…FPIA, CAAI…LATA, PLMV…IAIY, YVVF…GSAI, AGTH…MLFL, LLVL…EFVM, SAWE…AWLF, LTYF…PAVG, ARLF…FFFA, and KTLA…IVDV.

The protein to S.marcescens SfuB.

The protein resides in the cell inner membrane. In terms of biological role, probably involved in polymerization and/or export of exopolysaccharide EPS I which functions as a virulence factor. May play a role in export of EPS I or its intermediates across the membranes. In Ralstonia solanacearum (Pseudomonas solanacearum), this protein is EPS I polysaccharide export inner membrane protein EpsF (epsF).